The sequence spans 63 residues: Large ribosomal subunit protein uL30 (63 aa).

It belongs to the universal ribosomal protein uL30 family. In terms of assembly, part of the 50S ribosomal subunit.

In Xanthomonas campestris pv. campestris (strain 8004), this protein is Large ribosomal subunit protein uL30.